A 1171-amino-acid polypeptide reads, in one-letter code: ATP-dependent helicase/deoxyribonuclease subunit B (1171 aa).

One can recognise a UvrD-like helicase ATP-binding domain in the interval 1 to 343 (MSLRFVIGRA…LVAEENYRYR (343 aa)). 8–15 (GRAGSGKS) provides a ligand contact to ATP. In terms of domain architecture, UvrD-like helicase C-terminal spans 281 to 587 (MEQPRFHSPA…QFANIPPSLD (307 aa)). [4Fe-4S] cluster-binding residues include cysteine 805, cysteine 1129, cysteine 1132, and cysteine 1138.

The protein belongs to the helicase family. AddB/RexB type 1 subfamily. Heterodimer of AddA and AddB. It depends on Mg(2+) as a cofactor. The cofactor is [4Fe-4S] cluster.

In terms of biological role, the heterodimer acts as both an ATP-dependent DNA helicase and an ATP-dependent, dual-direction single-stranded exonuclease. Recognizes the chi site generating a DNA molecule suitable for the initiation of homologous recombination. The AddB subunit has 5' -&gt; 3' nuclease activity but not helicase activity. This is ATP-dependent helicase/deoxyribonuclease subunit B from Bacillus anthracis.